Reading from the N-terminus, the 169-residue chain is Ureidoglycolate lyase (169 aa).

The protein belongs to the ureidoglycolate lyase family. In terms of assembly, homodimer. It depends on Ni(2+) as a cofactor.

The catalysed reaction is (S)-ureidoglycolate = urea + glyoxylate. Its pathway is nitrogen metabolism; (S)-allantoin degradation. Its function is as follows. Catalyzes the catabolism of the allantoin degradation intermediate (S)-ureidoglycolate, generating urea and glyoxylate. Involved in the utilization of allantoin as nitrogen source. The sequence is that of Ureidoglycolate lyase from Brucella abortus biovar 1 (strain 9-941).